A 499-amino-acid chain; its full sequence is NADH-quinone oxidoreductase subunit 14 (499 aa).

The next 14 membrane-spanning stretches (helical) occupy residues 9–29 (ILPE…GAYL), 37–57 (TLLW…GLGN), 76–96 (FAKV…ADYM), 104–124 (FEFP…VSAG), 126–146 (LLTL…VAAM), 161–181 (FVLG…VYGF), 196–216 (AGHL…GLSF), 235–255 (PTPV…ALIA), 269–289 (WSQI…IAGI), 301–321 (SSIA…AIGV), 324–344 (MLLY…FILS), 369–389 (ALAM…LGFF), 402–422 (GMGW…FYYL), and 446–466 (YLAL…MFGV).

The protein belongs to the complex I subunit 2 family. NDH-1 is composed of at least 14 different subunits, Nqo1 to Nqo14. The complex has a L-shaped structure, with the hydrophobic arm (subunits Nqo7, Nqo8, Nqo10 to Nqo14) embedded in the inner membrane and the hydrophilic peripheral arm (subunits Nqo1 to Nqo6, Nqo9) protruding into the bacterial cytoplasm. The hydrophilic domain contains all the redox centers.

It is found in the cell inner membrane. It catalyses the reaction a quinone + NADH + 5 H(+)(in) = a quinol + NAD(+) + 4 H(+)(out). Its function is as follows. NDH-1 shuttles electrons from NADH, via FMN and iron-sulfur (Fe-S) centers, to quinones in the respiratory chain. The immediate electron acceptor for the enzyme in this species is believed to be ubiquinone. Couples the redox reaction to proton translocation (for every two electrons transferred, four hydrogen ions are translocated across the cytoplasmic membrane), and thus conserves the redox energy in a proton gradient. This Paracoccus denitrificans protein is NADH-quinone oxidoreductase subunit 14.